A 291-amino-acid polypeptide reads, in one-letter code: Ribonuclease Z (291 aa).

7 residues coordinate Zn(2+): H61, H63, D65, H66, H133, D201, and H257. D65 (proton acceptor) is an active-site residue.

It belongs to the RNase Z family. Homodimer. Requires Zn(2+) as cofactor.

The enzyme catalyses Endonucleolytic cleavage of RNA, removing extra 3' nucleotides from tRNA precursor, generating 3' termini of tRNAs. A 3'-hydroxy group is left at the tRNA terminus and a 5'-phosphoryl group is left at the trailer molecule.. In terms of biological role, zinc phosphodiesterase, which displays some tRNA 3'-processing endonuclease activity. Probably involved in tRNA maturation, by removing a 3'-trailer from precursor tRNA. The chain is Ribonuclease Z from Saccharolobus islandicus (strain M.16.27) (Sulfolobus islandicus).